A 354-amino-acid polypeptide reads, in one-letter code: Protein sex-lethal (354 aa).

A disordered region spans residues 1–20; it reads MYGNNNPGSNNNNGGYPPYG. RRM domains lie at 127-205 and 213-293; these read TNLI…YARP and TNLY…LAQE.

In terms of assembly, part of a complex containing fl(2)d, Sxl and vir. Interacts with nito. Interacts with Unr; cooperates with Sxl to prevent translation of msl-2 transcripts. Interacts with how; promoting nuclear retention of msl-2 transcripts. In terms of tissue distribution, the embryo-specific isoform is not expressed in the pole cells, which are the progenitors of the germline.

It localises to the nucleus. It is found in the cytoplasm. Sex determination switch protein, which controls sexual development and dosage compensation in females. Sxl protein is only active in females: it is inactive in males throughout development. Acts as a mRNA-binding protein, which specifically binds to a subset of pre-mRNAs and mRNAs and regulates their processing and/or translation. Promotes sexual development by controlling the female-specific alternative splicing of the transformer (tra) pre-mRNA: binds tightly to a characteristic uridine-rich polypyrimidine tract at the non-sex specific 3' splice site in one of the tra introns, preventing the general splicing factor U2AF from binding to this site and forcing it to bind to the female-specific 3' splice site. Acts as an inhibitor of dosage compensation in females by preventing production of msl-2 protein, an essential component of the MSL complex, the complex that mediates X-chromosome dosage compensation. Specifially binds to uridine stretches in both the 5'- and 3'-UTR of msl-2 transcripts. Sxl first acts at the splicing level by promoting retention of an intron in the 5' UTR of msl-2 pre-mRNA. The retained intron contains Sxl-binding sites that are required for subsequent steps of repression: after msl-2 mRNA export into the cytoplasm, Sxl coordinates its translational repression by targeting early steps of translation initiation. Together with how, Sxl also prevents production of msl-2 protein by preventing nuclear export of msl-2 transcripts. The chain is Protein sex-lethal from Drosophila subobscura (Fruit fly).